The following is a 382-amino-acid chain: MDQQKVNLLNYNYSQLRELLIAWDEKPFRAQQLFQWIHQVGICDFAQMTNLGKVLRNKLSQLACIDLPEIVACQKSADGTHKWLLKLECGNCIETVFIPEANRGTLCVSSQVGCALNCSFCSTAKQGFNRNLSTAEIIGQVWLAARELSDNNGTHDKKITNVVMMGMGEPLLNFDNVVSAMNIMMDDLAYGLSKRRVTLSTSGVLPEMERLREVSPVALAVSLHAPTDELRNELVPINKKYPLSQLISLCKRYFKDEPRRKVTFEYVMLKGVNDQPEHASQLIKLLHNVPAKVNLIPFNPFPLTQYQRSSRETIDAFRDKLMKHGINTITRKTRGDDIDAACGQLAGEVKDKTSRSQRWQKLHFMSKTEKSTELTISSEEIA.

The active-site Proton acceptor is the Glu94. Residues 100 to 336 (EANRGTLCVS…NTITRKTRGD (237 aa)) form the Radical SAM core domain. A disulfide bond links Cys107 and Cys342. The [4Fe-4S] cluster site is built by Cys114, Cys118, and Cys121. S-adenosyl-L-methionine is bound by residues 168 to 169 (GE), Ser200, 222 to 224 (SLH), and Asn299. The active-site S-methylcysteine intermediate is Cys342.

The protein belongs to the radical SAM superfamily. RlmN family. Requires [4Fe-4S] cluster as cofactor.

It is found in the cytoplasm. It carries out the reaction adenosine(2503) in 23S rRNA + 2 reduced [2Fe-2S]-[ferredoxin] + 2 S-adenosyl-L-methionine = 2-methyladenosine(2503) in 23S rRNA + 5'-deoxyadenosine + L-methionine + 2 oxidized [2Fe-2S]-[ferredoxin] + S-adenosyl-L-homocysteine. The enzyme catalyses adenosine(37) in tRNA + 2 reduced [2Fe-2S]-[ferredoxin] + 2 S-adenosyl-L-methionine = 2-methyladenosine(37) in tRNA + 5'-deoxyadenosine + L-methionine + 2 oxidized [2Fe-2S]-[ferredoxin] + S-adenosyl-L-homocysteine. Its function is as follows. Specifically methylates position 2 of adenine 2503 in 23S rRNA and position 2 of adenine 37 in tRNAs. m2A2503 modification seems to play a crucial role in the proofreading step occurring at the peptidyl transferase center and thus would serve to optimize ribosomal fidelity. This is Dual-specificity RNA methyltransferase RlmN from Legionella pneumophila (strain Paris).